The primary structure comprises 353 residues: uncharacterized protein (353 aa).

Residues 1-18 (MKFVLFAQLAAVAAPAIA) form the signal peptide. Positions 94–119 (EGGNVRRVPGGPSQSARQIGDSSTPM) are disordered. Polar residues predominate over residues 105–119 (PSQSARQIGDSSTPM). N-linked (GlcNAc...) asparagine glycosylation is found at asparagine 165 and asparagine 312.

Belongs to the glycosyl hydrolase 3 family.

It is found in the secreted. This is an uncharacterized protein from Arthroderma benhamiae (strain ATCC MYA-4681 / CBS 112371) (Trichophyton mentagrophytes).